Here is a 539-residue protein sequence, read N- to C-terminus: Capsid protein VP1 (539 aa).

The tract at residues 1–221 (MKMASNDANP…FIFLVPPTVE (221 aa)) is shell domain. Residues 222–274 (SRTKPFTVPVLTVEEMSNSRFPIPLEKLYTGPSSAFVVQPQNGRCTTDGVLLG) form a P1 sub-domain 1 region. The protruding domain stretch occupies residues 222–539 (SRTKPFTVPV…GNGTGRRRAL (318 aa)). The segment at 275–417 (TTQLSAVNIC…SGRTGHNVHL (143 aa)) is P2 sub-domain. Residues 418 to 539 (APAVAPTFPG…GNGTGRRRAL (122 aa)) are P1 sub-domain 2.

It belongs to the caliciviridae capsid protein family. As to quaternary structure, homodimer. Homomultimer. Interacts with the minor capsid protein VP2. Interacts (via C-terminus) with host type I histo-blood group structures antigens at the surface of target cells. In terms of processing, may be cleaved by host protease to generate soluble capsid protein. Assembled capsid cannot be cleaved.

The protein resides in the virion. It localises to the host cytoplasm. In terms of biological role, capsid protein self assembles to form an icosahedral capsid with a T=3 symmetry, about 38 nm in diameter, and consisting of 180 capsid proteins. A smaller form of capsid with a diameter of 23 nm might be capsid proteins assembled as icosahedron with T=1 symmetry. The capsid encapsulates the genomic RNA and is decorated with VP2 proteins. Attaches virion to target cells by binding histo-blood group antigens (HBGAs) present on gastroduodenal epithelial cells. The soluble capsid protein may play a role in viral immunoevasion. This chain is Capsid protein VP1, found in Homo sapiens (Human).